A 112-amino-acid polypeptide reads, in one-letter code: MPYRKFSRPTNHRRALLRNITTSLLKHGKIVTTEPKAKELRRIADKMITLGKQGDLHARRQALAFIQEESVVTHLFKEIAPKYATRQGGYTRVLKAGFRRGDAAPMCIVELV.

This sequence belongs to the bacterial ribosomal protein bL17 family. In terms of assembly, part of the 50S ribosomal subunit. Contacts protein L32.

This Heliobacterium modesticaldum (strain ATCC 51547 / Ice1) protein is Large ribosomal subunit protein bL17.